A 91-amino-acid polypeptide reads, in one-letter code: Uteroglobin (91 aa).

Residues 1–21 (MKLAVTLTLVTLALCCSSASA) form the signal peptide.

It belongs to the secretoglobin family. In terms of assembly, antiparallel homodimer; disulfide-linked. Interaction with LMBR1L has been observed in PubMed:16423471, but not in PubMed:23964685. Club cells (nonciliated cells of the surface epithelium of the pulmonary airways).

It localises to the secreted. Its function is as follows. Binds phosphatidylcholine, phosphatidylinositol, polychlorinated biphenyls (PCB) and weakly progesterone, potent inhibitor of phospholipase A2. The protein is Uteroglobin (SCGB1A1) of Homo sapiens (Human).